A 348-amino-acid chain; its full sequence is RNA 3'-terminal phosphate cyclase (348 aa).

Residues Gln-107 and 290-294 (HLADQ) contribute to the ATP site. His-316 (tele-AMP-histidine intermediate) is an active-site residue.

The protein belongs to the RNA 3'-terminal cyclase family. Type 1 subfamily.

The protein resides in the cytoplasm. It catalyses the reaction a 3'-end 3'-phospho-ribonucleotide-RNA + ATP = a 3'-end 2',3'-cyclophospho-ribonucleotide-RNA + AMP + diphosphate. Its function is as follows. Catalyzes the conversion of 3'-phosphate to a 2',3'-cyclic phosphodiester at the end of RNA. The mechanism of action of the enzyme occurs in 3 steps: (A) adenylation of the enzyme by ATP; (B) transfer of adenylate to an RNA-N3'P to produce RNA-N3'PP5'A; (C) and attack of the adjacent 2'-hydroxyl on the 3'-phosphorus in the diester linkage to produce the cyclic end product. The biological role of this enzyme is unknown but it is likely to function in some aspects of cellular RNA processing. The polypeptide is RNA 3'-terminal phosphate cyclase (Nostoc punctiforme (strain ATCC 29133 / PCC 73102)).